We begin with the raw amino-acid sequence, 111 residues long: uncharacterized protein (111 aa).

The interval 12–34 (AWCPSRPPASAPSAPQEAARRGD) is disordered. Residues 71–76 (PNIIIT) are required for interaction with PPP3CA. Residues threonine 79 and threonine 81 each carry the phosphothreonine modification.

In terms of assembly, interacts (via PxIxIT motif, when phosphorylated on Thr-79) with PPP3CA.

This is an uncharacterized protein from Mus musculus (Mouse).